Here is a 346-residue protein sequence, read N- to C-terminus: GTPase Obg (346 aa).

Positions M1–L159 constitute an Obg domain. A disordered region spans residues N127 to E149. A compositionally biased stretch (polar residues) spans F130 to Q140. Positions A160 to E333 constitute an OBG-type G domain. Residues G166–S173, F191–Y195, D213–G216, N283–D286, and S314–V316 each bind GTP. Mg(2+) contacts are provided by S173 and T193.

The protein belongs to the TRAFAC class OBG-HflX-like GTPase superfamily. OBG GTPase family. In terms of assembly, monomer. Requires Mg(2+) as cofactor.

The protein resides in the cytoplasm. An essential GTPase which binds GTP, GDP and possibly (p)ppGpp with moderate affinity, with high nucleotide exchange rates and a fairly low GTP hydrolysis rate. Plays a role in control of the cell cycle, stress response, ribosome biogenesis and in those bacteria that undergo differentiation, in morphogenesis control. This is GTPase Obg from Hydrogenovibrio crunogenus (strain DSM 25203 / XCL-2) (Thiomicrospira crunogena).